A 317-amino-acid polypeptide reads, in one-letter code: Ferrochelatase (317 aa).

Residues H184 and E259 each coordinate Fe cation.

This sequence belongs to the ferrochelatase family.

It localises to the cytoplasm. It catalyses the reaction heme b + 2 H(+) = protoporphyrin IX + Fe(2+). It functions in the pathway porphyrin-containing compound metabolism; protoheme biosynthesis; protoheme from protoporphyrin-IX: step 1/1. Its function is as follows. Catalyzes the ferrous insertion into protoporphyrin IX. In Chlamydia muridarum (strain MoPn / Nigg), this protein is Ferrochelatase.